A 229-amino-acid polypeptide reads, in one-letter code: MENQPKLNSSKEVIAFLAERFPHCFSAEGEARPLKIGIFQDLVDRVAGEMNLSKTQLRSALRLYTSSWRYLYGVKPGAIRVDLDGNPCGELEEQHVEHARKQLEEAKARVQAQRAEQQAKKREAAAAAGDKESAPRRERKPRPAAPRRKEGAERKPRAEKPAAKAPRAPREEKHTPVSDISALTVGQALKVKAGNDAMDATVLEITKDGVRVQLNSGMSLIVRAEHLVF.

The segment at 105–178 (EAKARVQAQR…PREEKHTPVS (74 aa)) is disordered. Residues 117 to 136 (QQAKKREAAAAAGDKESAPR) are compositionally biased toward basic and acidic residues. A compositionally biased stretch (basic residues) spans 137–146 (RERKPRPAAP). The segment covering 147 to 176 (RRKEGAERKPRAEKPAAKAPRAPREEKHTP) has biased composition (basic and acidic residues).

It belongs to the ProQ family.

Its subcellular location is the cytoplasm. Functionally, RNA chaperone with significant RNA binding, RNA strand exchange and RNA duplexing activities. May regulate ProP activity through an RNA-based, post-transcriptional mechanism. The chain is RNA chaperone ProQ from Escherichia fergusonii (strain ATCC 35469 / DSM 13698 / CCUG 18766 / IAM 14443 / JCM 21226 / LMG 7866 / NBRC 102419 / NCTC 12128 / CDC 0568-73).